Consider the following 394-residue polypeptide: Putative fimbrial assembly protein FimD, serogroup D (394 aa).

This Dichelobacter nodosus (Bacteroides nodosus) protein is Putative fimbrial assembly protein FimD, serogroup D (fimD).